A 257-amino-acid polypeptide reads, in one-letter code: UPF0246 protein Sputcn32_1053 (257 aa).

This sequence belongs to the UPF0246 family.

This Shewanella putrefaciens (strain CN-32 / ATCC BAA-453) protein is UPF0246 protein Sputcn32_1053.